The primary structure comprises 513 residues: GMP synthase [glutamine-hydrolyzing] (513 aa).

Positions 3-200 (SVLVLDFGSQ…LIDIAGITPD (198 aa)) constitute a Glutamine amidotransferase type-1 domain. The active-site Nucleophile is the cysteine 80. Catalysis depends on residues histidine 174 and glutamate 176. Residues 201 to 388 (WSPKHFIDHQ…LGIAEDILMR (188 aa)) enclose the GMPS ATP-PPase domain. 228-234 (SGGVDSS) serves as a coordination point for ATP.

In terms of assembly, homodimer.

It catalyses the reaction XMP + L-glutamine + ATP + H2O = GMP + L-glutamate + AMP + diphosphate + 2 H(+). It functions in the pathway purine metabolism; GMP biosynthesis; GMP from XMP (L-Gln route): step 1/1. Functionally, catalyzes the synthesis of GMP from XMP. In Chlorobium limicola (strain DSM 245 / NBRC 103803 / 6330), this protein is GMP synthase [glutamine-hydrolyzing].